A 562-amino-acid chain; its full sequence is Malate synthase (562 aa).

Residue arginine 177 is the Proton acceptor of the active site. Aspartate 463 acts as the Proton donor in catalysis. Positions 560-562 (SRL) match the Microbody targeting signal motif.

It belongs to the malate synthase family.

It is found in the glyoxysome. It carries out the reaction glyoxylate + acetyl-CoA + H2O = (S)-malate + CoA + H(+). It functions in the pathway carbohydrate metabolism; glyoxylate cycle; (S)-malate from isocitrate: step 2/2. Functionally, does not seem to be essential for lipid utilization and gluconeogenesis in seedlings. This Arabidopsis thaliana (Mouse-ear cress) protein is Malate synthase.